The sequence spans 819 residues: Leucine--tRNA ligase (819 aa).

A 'HIGH' region motif is present at residues 40–51; it reads PYPSGAGLHVGH. The 'KMSKS' region motif lies at 600–604; that stretch reads KMSKS. Lys603 is a binding site for ATP.

This sequence belongs to the class-I aminoacyl-tRNA synthetase family.

It localises to the cytoplasm. The catalysed reaction is tRNA(Leu) + L-leucine + ATP = L-leucyl-tRNA(Leu) + AMP + diphosphate. In Chlamydia trachomatis serovar D (strain ATCC VR-885 / DSM 19411 / UW-3/Cx), this protein is Leucine--tRNA ligase.